A 257-amino-acid chain; its full sequence is MIVAVDVGNTSTKIALCENGTVVDKWRISTCGKRTAAEYFSCISVLASRRSADILAGVRGAAISSVVPVVNRHVEELFERFFNISPVFITNSHADLFGLKICLAQPTIGADRVADLVAAKTLWPTSDLLVIDMGTATVFNLLDRNGGLYGQVVAPGVSCLVHSMRECTALLPQTLVRESEKIVCDSTAASLEAGLYWGYRAMVEGITKQIMRESTRTLRVIATGGGVGLFRNCDYLNHIDELLTIKGIVQIYEKTQG.

6-13 (DVGNTSTK) contacts ATP. Residue 109 to 112 (GADR) coordinates substrate. The Proton acceptor role is filled by D111. D132 provides a ligand contact to K(+). Residue T135 coordinates ATP. Residue T187 participates in substrate binding.

Belongs to the type III pantothenate kinase family. Homodimer. NH4(+) is required as a cofactor. Requires K(+) as cofactor.

It localises to the cytoplasm. The catalysed reaction is (R)-pantothenate + ATP = (R)-4'-phosphopantothenate + ADP + H(+). It functions in the pathway cofactor biosynthesis; coenzyme A biosynthesis; CoA from (R)-pantothenate: step 1/5. Its function is as follows. Catalyzes the phosphorylation of pantothenate (Pan), the first step in CoA biosynthesis. This is Type III pantothenate kinase from Anaplasma marginale (strain St. Maries).